Here is a 317-residue protein sequence, read N- to C-terminus: Acetyl-coenzyme A carboxylase carboxyl transferase subunit alpha (317 aa).

One can recognise a CoA carboxyltransferase C-terminal domain in the interval 40-294 (RLQKKSEELT…KQQILADLQD (255 aa)).

It belongs to the AccA family. Acetyl-CoA carboxylase is a heterohexamer composed of biotin carboxyl carrier protein (AccB), biotin carboxylase (AccC) and two subunits each of ACCase subunit alpha (AccA) and ACCase subunit beta (AccD).

It localises to the cytoplasm. It catalyses the reaction N(6)-carboxybiotinyl-L-lysyl-[protein] + acetyl-CoA = N(6)-biotinyl-L-lysyl-[protein] + malonyl-CoA. The protein operates within lipid metabolism; malonyl-CoA biosynthesis; malonyl-CoA from acetyl-CoA: step 1/1. Its function is as follows. Component of the acetyl coenzyme A carboxylase (ACC) complex. First, biotin carboxylase catalyzes the carboxylation of biotin on its carrier protein (BCCP) and then the CO(2) group is transferred by the carboxyltransferase to acetyl-CoA to form malonyl-CoA. In Actinobacillus pleuropneumoniae serotype 5b (strain L20), this protein is Acetyl-coenzyme A carboxylase carboxyl transferase subunit alpha.